The chain runs to 102 residues: Movement protein (102 aa).

Residues 43–63 traverse the membrane as a helical segment; it reads VVALIVILFAVGIVYLAYTLF. The segment at 82–102 is disordered; that stretch reads IGFGNTPLRRPGEGNPNGGPV.

The protein belongs to the mastrevirus movement protein family. As to quaternary structure, interacts with the capsid protein (CP). Part of a MP-CP-viral DNA complex.

The protein resides in the host membrane. Its function is as follows. Involved in the viral transport within, and between cells. The protein is Movement protein of Tobacco yellow dwarf virus (strain Australia) (TYDV).